A 271-amino-acid chain; its full sequence is MLLTVDVRNTNIVLGLFSGTGEYSKLLQDWRMRTDPRMTADELALTFRGLLGTHVDEITGVAALSTVPSVLREIRVMLERYWGHVPHVVVEPGIRTGVPLLVDNPKEVGADRIVNSLAAHHLYEGPCIVVDFGTSTCVDVVSAKGEFLGGCIAPGLEISTDALASQSAALRKVELVRPRSVVGKNTVECMQSGAVFGFAGLVDGLVNRVRDELPEFGGDDVSVIATGDSAPLIIPESDTIDHLERDLTLEGLRLVFERNQARRGSGRRPVA.

6 to 13 (DVRNTNIV) contributes to the ATP binding site. 109–112 (GADR) is a binding site for substrate. D111 (proton acceptor) is an active-site residue. D131 contacts K(+). T134 contacts ATP. Residue T186 participates in substrate binding.

The protein belongs to the type III pantothenate kinase family. Homodimer. NH4(+) is required as a cofactor. The cofactor is K(+).

The protein localises to the cytoplasm. The enzyme catalyses (R)-pantothenate + ATP = (R)-4'-phosphopantothenate + ADP + H(+). It functions in the pathway cofactor biosynthesis; coenzyme A biosynthesis; CoA from (R)-pantothenate: step 1/5. In terms of biological role, catalyzes the phosphorylation of pantothenate (Pan), the first step in CoA biosynthesis. The chain is Type III pantothenate kinase from Rhodococcus erythropolis (strain PR4 / NBRC 100887).